The chain runs to 308 residues: Porphobilinogen deaminase (308 aa).

C241 is modified (S-(dipyrrolylmethanemethyl)cysteine).

Belongs to the HMBS family. Monomer. Dipyrromethane is required as a cofactor.

The enzyme catalyses 4 porphobilinogen + H2O = hydroxymethylbilane + 4 NH4(+). Its pathway is porphyrin-containing compound metabolism; protoporphyrin-IX biosynthesis; coproporphyrinogen-III from 5-aminolevulinate: step 2/4. Functionally, tetrapolymerization of the monopyrrole PBG into the hydroxymethylbilane pre-uroporphyrinogen in several discrete steps. This chain is Porphobilinogen deaminase, found in Staphylococcus aureus (strain Newman).